The sequence spans 177 residues: Large ribosomal subunit protein uL6 (177 aa).

The protein belongs to the universal ribosomal protein uL6 family. As to quaternary structure, part of the 50S ribosomal subunit.

This protein binds to the 23S rRNA, and is important in its secondary structure. It is located near the subunit interface in the base of the L7/L12 stalk, and near the tRNA binding site of the peptidyltransferase center. The sequence is that of Large ribosomal subunit protein uL6 from Methanosarcina barkeri (strain Fusaro / DSM 804).